Here is a 318-residue protein sequence, read N- to C-terminus: HTH-type transcriptional regulatory protein TyrR (318 aa).

Positions 15 to 239 (FIVQSEAMKS…LYNTLYRACS (225 aa)) constitute a Sigma-54 factor interaction; truncated domain. Residues 43-50 (GETGSGKD) and 101-110 (ANKGTVLLDG) contribute to the ATP site. A DNA-binding region (H-T-H motif) is located at residues 292 to 312 (STRKLAQRLGVSHTAIANKLK).

In terms of assembly, homodimer. In presence of tyrosine (or high concentrations of phenylalanine or tryptophan) and ATP, it self-associates to form a hexamer.

The protein localises to the cytoplasm. Its activity is regulated as follows. The DNA binding ability is drastically reduced in the presence of ATP. Tyrosine further reduces the binding affinity of TyrR in the presence of ATP. Transcriptional regulator of the TyrR regulon, which includes a number of genes coding for proteins involved in the biosynthesis or transport of the three aromatic amino acids, phenylalanine, tyrosine and tryptophan. These three aromatic amino acids act as effectors which bind to the TyrR protein to form an active regulatory protein. Acts by binding specifically to TyrR boxes in the promoter region of the target genes. Can efficiently repress the transcription of the aroF promoter, but lacks the ability to function as a transcriptional activator. This chain is HTH-type transcriptional regulatory protein TyrR, found in Haemophilus influenzae (strain ATCC 51907 / DSM 11121 / KW20 / Rd).